Reading from the N-terminus, the 729-residue chain is Elongation factor 2 (729 aa).

The tr-type G domain maps to 19 to 262 (EQIRNIAIAA…MVCEHFPNPV (244 aa)). Residues 28-35 (AHVDHGKT), 94-98 (DTPGH), and 148-151 (NKVD) contribute to the GTP site. Histidine 597 is subject to Diphthamide.

Belongs to the TRAFAC class translation factor GTPase superfamily. Classic translation factor GTPase family. EF-G/EF-2 subfamily.

Its subcellular location is the cytoplasm. In terms of biological role, catalyzes the GTP-dependent ribosomal translocation step during translation elongation. During this step, the ribosome changes from the pre-translocational (PRE) to the post-translocational (POST) state as the newly formed A-site-bound peptidyl-tRNA and P-site-bound deacylated tRNA move to the P and E sites, respectively. Catalyzes the coordinated movement of the two tRNA molecules, the mRNA and conformational changes in the ribosome. The chain is Elongation factor 2 from Natronomonas pharaonis (strain ATCC 35678 / DSM 2160 / CIP 103997 / JCM 8858 / NBRC 14720 / NCIMB 2260 / Gabara) (Halobacterium pharaonis).